The sequence spans 254 residues: Alcohol dehydrogenase 2 (254 aa).

An NAD(+)-binding site is contributed by 10–33 (FVAGLGGIGFDTSREIVKSGPKNL). Ser-138 contacts substrate. Catalysis depends on Tyr-151, which acts as the Proton acceptor.

Belongs to the short-chain dehydrogenases/reductases (SDR) family. As to quaternary structure, homodimer.

It carries out the reaction a primary alcohol + NAD(+) = an aldehyde + NADH + H(+). The catalysed reaction is a secondary alcohol + NAD(+) = a ketone + NADH + H(+). This is Alcohol dehydrogenase 2 (Adh2) from Drosophila buzzatii (Fruit fly).